Here is a 222-residue protein sequence, read N- to C-terminus: N-acetyltransferase 8B (222 aa).

Residues 1-42 (MVSYHICEYQDSDYKSVVDVFTKGAEEYIPSTFRHLLLLPRT) are Cytoplasmic-facing. The helical; Signal-anchor for type II membrane protein transmembrane segment at 43 to 67 (LLLLLGVSLALVLVSGSWLLAVVCI) threads the bilayer. Residues 62 to 217 (LAVVCIFFLL…VGIRFVQLNY (156 aa)) enclose the N-acetyltransferase domain. The Lumenal portion of the chain corresponds to 68–222 (FFLLPFLWFL…VQLNYSFPSA (155 aa)). Lys-99 is modified (N6-acetyllysine).

Belongs to the NAT8 family. Post-translationally, acetylation on Lys-99 modulates enzymatic activity.

The protein localises to the endoplasmic reticulum-Golgi intermediate compartment membrane. It localises to the endoplasmic reticulum membrane. The enzyme catalyses L-lysyl-[protein] + acetyl-CoA = N(6)-acetyl-L-lysyl-[protein] + CoA + H(+). Endoplasmic reticulum (ER)-membrane-bound lysine N-acetyltransferase catalyzing the N6-acetylation of lysine residues in the lumen of the ER in various proteins, including PROM1 and BACE1, using acetyl-CoA as acetyl donor. Thereby, may regulate apoptosis through the acetylation and the regulation of the expression of PROM1. Acetylates and stabilizes BACE1 immature protein, leading to increased steady-state levels in neurons. By acting on BACE1 expression, may regulate amyloid beta-peptide formation. N(6)-lysine acetylation in ER maintains protein homeostasis and regulates reticulophagy. The sequence is that of N-acetyltransferase 8B from Rattus norvegicus (Rat).